The primary structure comprises 103 residues: Methanol dehydrogenase [cytochrome c] subunit 2 (103 aa).

A signal peptide spans 1-20; sequence MKRILTLTVAALALGTPALA. Residues Cys26 and Cys32 are joined by a disulfide bond.

The protein belongs to the methanol dehydrogenase subunit 2 family. In terms of assembly, heterotetramer composed of 2 alpha and 2 beta subunits.

It is found in the periplasm. The catalysed reaction is 2 Fe(III)-[cytochrome cL] + a primary alcohol = 2 Fe(II)-[cytochrome cL] + an aldehyde + 2 H(+). Catalyzes the oxidation of primary alcohols including methanol. This is Methanol dehydrogenase [cytochrome c] subunit 2 (moxI) from Paracoccus denitrificans.